The sequence spans 230 residues: Sugar fermentation stimulation protein homolog (230 aa).

It belongs to the SfsA family.

The protein is Sugar fermentation stimulation protein homolog of Pyrococcus furiosus (strain ATCC 43587 / DSM 3638 / JCM 8422 / Vc1).